Consider the following 143-residue polypeptide: 3-dehydroquinate dehydratase (143 aa).

Tyr-21 (proton acceptor) is an active-site residue. Substrate contacts are provided by Asn-73, His-79, and Asp-86. His-99 functions as the Proton donor in the catalytic mechanism. Residues 100-101 (IS) and Arg-110 each bind substrate.

It belongs to the type-II 3-dehydroquinase family. Homododecamer.

It catalyses the reaction 3-dehydroquinate = 3-dehydroshikimate + H2O. Its pathway is metabolic intermediate biosynthesis; chorismate biosynthesis; chorismate from D-erythrose 4-phosphate and phosphoenolpyruvate: step 3/7. In terms of biological role, catalyzes a trans-dehydration via an enolate intermediate. The chain is 3-dehydroquinate dehydratase from Deinococcus radiodurans (strain ATCC 13939 / DSM 20539 / JCM 16871 / CCUG 27074 / LMG 4051 / NBRC 15346 / NCIMB 9279 / VKM B-1422 / R1).